A 73-amino-acid chain; its full sequence is Small proline-rich protein 2G (73 aa).

Low complexity predominate over residues 1 to 11 (MSYQQQQCKQP). A disordered region spans residues 1–20 (MSYQQQQCKQPCQPPPVCPT). 3 repeat units span residues 21–29 (PKCPEPCPP), 30–38 (PKCPEPYLP), and 39–47 (PPCPPEHCP). The tract at residues 21–47 (PKCPEPCPPPKCPEPYLPPPCPPEHCP) is 3 X 9 AA approximate tandem repeats.

This sequence belongs to the cornifin (SPRR) family.

The protein localises to the cytoplasm. In terms of biological role, cross-linked envelope protein of keratinocytes. It is a keratinocyte protein that first appears in the cell cytosol, but ultimately becomes cross-linked to membrane proteins by transglutaminase. All that results in the formation of an insoluble envelope beneath the plasma membrane. This chain is Small proline-rich protein 2G (SPRR2G), found in Homo sapiens (Human).